The chain runs to 240 residues: Ribosomal RNA small subunit methyltransferase G (240 aa).

S-adenosyl-L-methionine contacts are provided by residues glycine 77, phenylalanine 82, 128–129 (AE), and arginine 148. Residues 217–240 (EKRSKTPKKYPRKAGTPNKSPLLK) are disordered.

The protein belongs to the methyltransferase superfamily. RNA methyltransferase RsmG family.

The protein resides in the cytoplasm. Functionally, specifically methylates the N7 position of guanine in position 535 of 16S rRNA. The chain is Ribosomal RNA small subunit methyltransferase G from Staphylococcus carnosus (strain TM300).